A 71-amino-acid polypeptide reads, in one-letter code: Sec-independent protein translocase protein TatA (71 aa).

A helical transmembrane segment spans residues 1–21 (MGSFSMWHWLIVLAIVLLLFG). A disordered region spans residues 40 to 71 (KKGMSDDDTAPDGTPKPADQSKTVDHRADDHK). Residues 61–71 (KTVDHRADDHK) show a composition bias toward basic and acidic residues.

Belongs to the TatA/E family. In terms of assembly, the Tat system comprises two distinct complexes: a TatABC complex, containing multiple copies of TatA, TatB and TatC subunits, and a separate TatA complex, containing only TatA subunits. Substrates initially bind to the TatABC complex, which probably triggers association of the separate TatA complex to form the active translocon.

It is found in the cell inner membrane. Part of the twin-arginine translocation (Tat) system that transports large folded proteins containing a characteristic twin-arginine motif in their signal peptide across membranes. TatA could form the protein-conducting channel of the Tat system. This Allorhizobium ampelinum (strain ATCC BAA-846 / DSM 112012 / S4) (Agrobacterium vitis (strain S4)) protein is Sec-independent protein translocase protein TatA.